A 335-amino-acid chain; its full sequence is Probable cytosolic iron-sulfur protein assembly protein Ciao1 (335 aa).

7 WD repeats span residues 12–51 (GHKG…WTTK), 57–96 (GHKR…FECN), 101–140 (GHEN…EFEC), 146–185 (PHTQ…SDWD), 192–231 (SHTS…NDAG), 250–289 (QHSR…KRDE), and 301–335 (AHDQ…KMTE).

Belongs to the WD repeat CIA1 family.

Its function is as follows. Essential component of the cytosolic iron-sulfur (Fe/S) protein assembly machinery. Required for the maturation of extramitochondrial Fe/S proteins. In Drosophila ananassae (Fruit fly), this protein is Probable cytosolic iron-sulfur protein assembly protein Ciao1.